Consider the following 246-residue polypeptide: Mast cell protease 9 (246 aa).

The signal sequence occupies residues 1–18 (MQALLFLMALLLPSRAGA). Residues 19-20 (EE) constitute a propeptide, activation peptide. The region spanning 21–244 (IIGGVESEPH…HVPWINRVIK (224 aa)) is the Peptidase S1 domain. An intrachain disulfide couples Cys50 to Cys66. Residues His65 and Asp109 each act as charge relay system in the active site. Cystine bridges form between Cys143–Cys208 and Cys174–Cys187. Ser202 serves as the catalytic Charge relay system.

This sequence belongs to the peptidase S1 family. Granzyme subfamily. Selectively expressed in uterine mast cells.

The polypeptide is Mast cell protease 9 (Mcpt9) (Mus musculus (Mouse)).